We begin with the raw amino-acid sequence, 284 residues long: MPAPVSVRDDLCRLVALSPGDGRIAGLVRQVCARALSLPSLPCEVAVNEPESPAEAVVAEFAEQFSVDVSAITGEQRSLLWTHLGEDAFGAVVAMYIADFVPRVRAGLEALGVGKEYLGWVTGPISWDHNTDLSAAVFNGFLPAVARMRALDPVTSELVRLRGAAQHNCRVCKSLREVSALDAGGSETLYGEIERFDTSVLLDVRAKAALRYADALIWTPAHLAVDVAVEVRSRFSDDEAVELTFDIMRNASNKVAVSLGADAPRVQQGTERYRIGLDGQTVFG.

This sequence to E.coli YnjA.

This is an uncharacterized protein from Mycobacterium tuberculosis (strain CDC 1551 / Oshkosh).